Here is an 878-residue protein sequence, read N- to C-terminus: Lon protease 2 (878 aa).

Residues 85–281 form the Lon N-terminal domain; that stretch reads LYLLPVKERP…KVLSLFKHEI (197 aa). 434 to 441 contributes to the ATP binding site; it reads GPPGVGKT. The Lon proteolytic domain occupies 668–850; that stretch reads NQQMGTVTGL…DDVAKLTFHI (183 aa). Catalysis depends on residues Ser756 and Lys799.

It belongs to the peptidase S16 family. As to quaternary structure, homohexamer. Organized in a ring with a central cavity.

The protein localises to the cytoplasm. The catalysed reaction is Hydrolysis of proteins in presence of ATP.. ATP-dependent serine protease that mediates the selective degradation of mutant and abnormal proteins as well as certain short-lived regulatory proteins. Required for cellular homeostasis and for survival from DNA damage and developmental changes induced by stress. Degrades polypeptides processively to yield small peptide fragments that are 5 to 10 amino acids long. Binds to DNA in a double-stranded, site-specific manner. The sequence is that of Lon protease 2 from Hydrogenovibrio crunogenus (strain DSM 25203 / XCL-2) (Thiomicrospira crunogena).